The following is a 204-amino-acid chain: Thymidylate kinase (204 aa).

Gly11–Ser18 lines the ATP pocket.

This sequence belongs to the thymidylate kinase family.

It catalyses the reaction dTMP + ATP = dTDP + ADP. In terms of biological role, phosphorylation of dTMP to form dTDP in both de novo and salvage pathways of dTTP synthesis. The sequence is that of Thymidylate kinase from Janthinobacterium sp. (strain Marseille) (Minibacterium massiliensis).